Here is a 216-residue protein sequence, read N- to C-terminus: Somatotropin (216 aa).

The first 26 residues, 1–26 (MAAGPRTSMLLAFALLCLPWTQEVGA), serve as a signal peptide directing secretion. Histidine 45 provides a ligand contact to Zn(2+). Cysteines 78 and 189 form a disulfide. Serine 131 is subject to Phosphoserine. Glutamate 198 lines the Zn(2+) pocket. Cysteine 206 and cysteine 214 are disulfide-bonded.

This sequence belongs to the somatotropin/prolactin family.

The protein localises to the secreted. In terms of biological role, plays an important role in growth control. Its major role in stimulating body growth is to stimulate the liver and other tissues to secrete IGF1. It stimulates both the differentiation and proliferation of myoblasts. It also stimulates amino acid uptake and protein synthesis in muscle and other tissues. In Balaenoptera physalus (Fin whale), this protein is Somatotropin (GH1).